A 61-amino-acid chain; its full sequence is Probradykinin-2 (61 aa).

The signal sequence occupies residues 1-22; it reads MSFLKKSLFLVLFLGLVSFSIC. Residues 23-50 constitute a propeptide that is removed on maturation; the sequence is EEEKRETEEEENEDEIEEQSEEKKRFEP. The segment at 24 to 61 is disordered; it reads EEKRETEEEENEDEIEEQSEEKKRFEPVPPGFTPFRQT. Over residues 30–42 the composition is skewed to acidic residues; sequence EEEENEDEIEEQS. Position 52 is a 4-hydroxyproline (P52).

Belongs to the frog skin active peptide (FSAP) family. Bradykinin-related peptide subfamily. In terms of tissue distribution, expressed by the skin glands.

It localises to the secreted. In terms of biological role, may produce in vitro relaxation of rat arterial smooth muscle and constriction of intestinal smooth muscle. May target bradykinin receptors (BDKRB). In Pithecopus azureus (Orange-legged monkey tree frog), this protein is Probradykinin-2.